We begin with the raw amino-acid sequence, 201 residues long: 7-methyl-GTP pyrophosphatase (201 aa).

Residue D73 is the Proton acceptor of the active site.

This sequence belongs to the Maf family. YceF subfamily. A divalent metal cation is required as a cofactor.

It localises to the cytoplasm. It carries out the reaction N(7)-methyl-GTP + H2O = N(7)-methyl-GMP + diphosphate + H(+). Its function is as follows. Nucleoside triphosphate pyrophosphatase that hydrolyzes 7-methyl-GTP (m(7)GTP). May have a dual role in cell division arrest and in preventing the incorporation of modified nucleotides into cellular nucleic acids. This Thiobacillus denitrificans (strain ATCC 25259 / T1) protein is 7-methyl-GTP pyrophosphatase.